Here is a 230-residue protein sequence, read N- to C-terminus: Orotidine 5'-phosphate decarboxylase (230 aa).

Substrate is bound by residues Asp10, Lys31, 58–67 (DLKLHDIPNT), Thr117, Arg179, Gln188, Gly208, and Arg209. Residue Lys60 is the Proton donor of the active site.

The protein belongs to the OMP decarboxylase family. Type 1 subfamily. As to quaternary structure, homodimer.

It catalyses the reaction orotidine 5'-phosphate + H(+) = UMP + CO2. The protein operates within pyrimidine metabolism; UMP biosynthesis via de novo pathway; UMP from orotate: step 2/2. In terms of biological role, catalyzes the decarboxylation of orotidine 5'-monophosphate (OMP) to uridine 5'-monophosphate (UMP). The chain is Orotidine 5'-phosphate decarboxylase from Staphylococcus haemolyticus (strain JCSC1435).